A 117-amino-acid polypeptide reads, in one-letter code: Fluoride-specific ion channel FluC 1 (117 aa).

4 helical membrane passes run 1–21 (MIHI…RAWL), 35–55 (IATL…YGIA), 60–80 (LFSL…STLS), and 97–117 (FSYS…GYSI). Gly-71 and Thr-74 together coordinate Na(+).

It belongs to the fluoride channel Fluc/FEX (TC 1.A.43) family.

Its subcellular location is the cell membrane. The enzyme catalyses fluoride(in) = fluoride(out). Its activity is regulated as follows. Na(+) is not transported, but it plays an essential structural role and its presence is essential for fluoride channel function. Its function is as follows. Fluoride-specific ion channel. Important for reducing fluoride concentration in the cell, thus reducing its toxicity. The protein is Fluoride-specific ion channel FluC 1 of Staphylococcus haemolyticus (strain JCSC1435).